The following is a 130-amino-acid chain: Small ribosomal subunit protein uS9 (130 aa).

The protein belongs to the universal ribosomal protein uS9 family.

This chain is Small ribosomal subunit protein uS9, found in Xylella fastidiosa (strain 9a5c).